Reading from the N-terminus, the 1141-residue chain is Translocase of chloroplast 125, chloroplastic (1141 aa).

Disordered regions lie at residues 1-177 (MDAL…ISGY) and 325-431 (GFVE…EANE). Composition is skewed to basic and acidic residues over residues 57–72 (RVPE…KRDG) and 107–121 (IDGR…REDL). The segment covering 132-150 (YDDDDDDEEEEEDGSEEGE) has biased composition (acidic residues). Positions 151-167 (STSSSIINSEYSSSASN) are enriched in low complexity. Residues 328-353 (EAEEAESDVFTEGEDGYDDEDEDGDI) show a composition bias toward acidic residues. Composition is skewed to low complexity over residues 389-401 (RSSA…TTAT) and 408-429 (TASS…SSEA). Positions 505-734 (DFACTILVLG…KLQEASTPGK (230 aa)) constitute an AIG1-type G domain. The interval 514-521 (GKTGVGKS) is G1. 517–522 (GVGKSA) lines the GTP pocket. Ser521 contributes to the Mg(2+) binding site. Residues 541-545 (STTKV) are G2. Residues 561 to 564 (DTPG) are G3. The G4 stretch occupies residues 633–636 (THAS). Residues His634 and 682-683 (EN) contribute to the GTP site. Residues 682-684 (ENH) are G5. Disordered regions lie at residues 758 to 795 (QLKM…PFRP) and 832 to 871 (IRRR…AVPM). Positions 770 to 789 (EDSDDDSDEEDEEEGDEYDD) are enriched in acidic residues. The segment covering 832-841 (IRRRRERKKQ) has biased composition (basic residues). The helical transmembrane segment at 1116 to 1136 (MVLIGIVPILRSLINCRFGFG) threads the bilayer.

This sequence belongs to the TRAFAC class TrmE-Era-EngA-EngB-Septin-like GTPase superfamily. AIG1/Toc34/Toc159-like paraseptin GTPase family. TOC159 subfamily. Part of the TOC core complex. Requires Mg(2+) as cofactor.

The protein resides in the plastid. It localises to the chloroplast outer membrane. Functionally, GTPase involved in protein precursor import into chloroplasts. Seems to recognize chloroplast-destined precursor proteins and regulate their presentation to the translocation channel through GTP hydrolysis. Probably specialized in the import of nuclear encoded non-photosynthetic preproteins from the cytoplasm to the chloroplast. This is Translocase of chloroplast 125, chloroplastic from Physcomitrium patens (Spreading-leaved earth moss).